Here is a 326-residue protein sequence, read N- to C-terminus: Acetyl-coenzyme A carboxylase carboxyl transferase subunit beta (326 aa).

The 270-residue stretch at 29-298 (LWIKCEACGT…TLISDESLET (270 aa)) folds into the CoA carboxyltransferase N-terminal domain. The Zn(2+) site is built by Cys-33, Cys-36, Cys-52, and Cys-55. The segment at 33–55 (CEACGTLTYTKDLQANQMVCPEC) adopts a C4-type zinc-finger fold. The segment at 302–326 (CHLPFQAESHNLSTTDNKIQPTPQG) is disordered. A compositionally biased stretch (polar residues) spans 309–326 (ESHNLSTTDNKIQPTPQG).

Belongs to the AccD/PCCB family. As to quaternary structure, acetyl-CoA carboxylase is a heterohexamer composed of biotin carboxyl carrier protein (AccB), biotin carboxylase (AccC) and two subunits each of ACCase subunit alpha (AccA) and ACCase subunit beta (AccD). Requires Zn(2+) as cofactor.

It localises to the cytoplasm. The catalysed reaction is N(6)-carboxybiotinyl-L-lysyl-[protein] + acetyl-CoA = N(6)-biotinyl-L-lysyl-[protein] + malonyl-CoA. It participates in lipid metabolism; malonyl-CoA biosynthesis; malonyl-CoA from acetyl-CoA: step 1/1. Functionally, component of the acetyl coenzyme A carboxylase (ACC) complex. Biotin carboxylase (BC) catalyzes the carboxylation of biotin on its carrier protein (BCCP) and then the CO(2) group is transferred by the transcarboxylase to acetyl-CoA to form malonyl-CoA. This chain is Acetyl-coenzyme A carboxylase carboxyl transferase subunit beta, found in Trichodesmium erythraeum (strain IMS101).